We begin with the raw amino-acid sequence, 214 residues long: Probable nicotinate-nucleotide adenylyltransferase (214 aa).

It belongs to the NadD family.

It catalyses the reaction nicotinate beta-D-ribonucleotide + ATP + H(+) = deamido-NAD(+) + diphosphate. The protein operates within cofactor biosynthesis; NAD(+) biosynthesis; deamido-NAD(+) from nicotinate D-ribonucleotide: step 1/1. Catalyzes the reversible adenylation of nicotinate mononucleotide (NaMN) to nicotinic acid adenine dinucleotide (NaAD). This is Probable nicotinate-nucleotide adenylyltransferase from Pseudomonas aeruginosa (strain UCBPP-PA14).